Reading from the N-terminus, the 372-residue chain is Tribbles homolog 1 (372 aa).

Disordered stretches follow at residues 1-23 (MRVG…ALLF) and 52-86 (ECSS…GSAP). A compositionally biased stretch (pro residues) spans 59 to 75 (YLSPPGSPCSPQPPPAA). A Protein kinase domain is found at 91–338 (IADYLLLPLA…APEILLHPWF (248 aa)). The COP1-binding motif lies at 355 to 360 (DQIVPE).

It belongs to the protein kinase superfamily. CAMK Ser/Thr protein kinase family. Tribbles subfamily. Monomer. Interacts (via protein kinase domain) with CEBPA. Interacts with COP1. As to expression, expressed in most human tissues with the highest levels in skeletal muscle, thyroid gland, pancreas, peripheral blood leukocytes, and bone marrow.

Adapter protein involved in protein degradation by interacting with COP1 ubiquitin ligase. The COP1-binding motif is masked by autoinhibitory interactions with the protein kinase domain. Serves to alter COP1 substrate specificity by directing the activity of COP1 toward CEBPA. Binds selectively the recognition sequence of CEBPA. Regulates myeloid cell differentiation by altering the expression of CEBPA in a COP1-dependent manner. Controls macrophage, eosinophil and neutrophil differentiation via the COP1-binding domain. Interacts with MAPK kinases and regulates activation of MAP kinases, but has no kinase activity. The sequence is that of Tribbles homolog 1 from Homo sapiens (Human).